Reading from the N-terminus, the 566-residue chain is Probable F-box protein At5g39490 (566 aa).

One can recognise an F-box domain in the interval 8 to 54 (ACLLLMLPEDIFVVISRFLSPSDICNLILCGKSLRALVDSEKTWLVQ). The tract at residues 318–338 (LRKSSSSKNTTPSQSEIRHSN) is disordered. The segment covering 320–332 (KSSSSKNTTPSQS) has biased composition (low complexity).

The chain is Probable F-box protein At5g39490 from Arabidopsis thaliana (Mouse-ear cress).